The following is a 689-amino-acid chain: MTKEWECRREQIIELSKINGMTIRELQARMSKMYKFDASIRSYKRVLARWGIRVHRQRFVSPRTEEAAARTASGDVSKALDELVTQLFHARQSDKDSLAQIEANFGLKLSKRALHYRRKRLALKRPPPDSHDSPNNSIPLMANSCLLSADNSSSSTTSNPNVAPPISTLPDPVATISSSSSSHLDMGAIHPPHHSSLPPHMGVDPSTMADAHNAHSSLTPPQSGYSSMPSLPYLQQPFQIPSQRFSRQQQSHPFPAAQHAVNGQPQALYPFIYQSRNVPMGSTMFASSNQSAAHPDGNNALPMDNTHANISYMQSSQSMPVNSYSYDRYTPNQPSYLESKPGNHQPSYTSEQPMYSTASVPQQISNGPTAVNGLPMNSYTPHSNHLHSPSPNSNSGPTDSLSAPNSTSSPSMAHANGASFASQYPSLNKSIFPASYSSSAEDGQNMQAPAHAYMQSSIYGVNQEQKSEYPSNLSMQSSMSIKDPSQLQRIHLYPQHSQYDPNGMTMRDHYSERIEPEAKPSDETLTVRSSRDLSVHNVGTLPVLSAAAATQAAMPHTMGPSAHDSASAPSPHMQSQQALPYQYYNPLPAMADPAQNVPQQLPPPIHSHLSDDQHIQYSYPNTFVNRFPQNIHHPSANLLDASAALNPVQNPLLMPQQNHEHSPLVRSDAALHDHGPLLPVYPDVDSRFV.

4 disordered regions span residues 121–206, 286–305, 322–414, and 552–611; these read LALK…VDPS, ASSN…PMDN, NSYS…SMAH, and AAMP…HLSD. Positions 133–158 are enriched in low complexity; the sequence is SPNNSIPLMANSCLLSADNSSSSTTS. Residues 322 to 380 show a composition bias toward polar residues; the sequence is NSYSYDRYTPNQPSYLESKPGNHQPSYTSEQPMYSTASVPQQISNGPTAVNGLPMNSYT. 2 stretches are compositionally biased toward low complexity: residues 381 to 411 and 560 to 572; these read PHSN…SSPS and PSAH…PSPH.

Its subcellular location is the cytoplasm. This is an uncharacterized protein from Schizosaccharomyces pombe (strain 972 / ATCC 24843) (Fission yeast).